The following is a 320-amino-acid chain: O(6)-methylguanine-induced apoptosis 2 (320 aa).

The segment at 46-91 is disordered; that stretch reads LNESPGPGSYLSHSPAEGCSPSFSKRGTGSFASKGGRVPRSFQRLS. STPGR repeat units lie at residues 49 to 82, 91 to 103, 132 to 163, 173 to 192, 213 to 233, 254 to 266, and 294 to 305; these read SPGP…KGGR, SPGP…QMSL, NPAP…KTRR, GPSP…SPQA, PGPG…TVLP, PGPG…NYNR, and PGPGFYEPTVLS. The segment covering 66–76 has biased composition (polar residues); sequence PSFSKRGTGSF. The interval 207 to 226 is disordered; it reads PVRNNIPGPGTYNPHQPPEP.

Belongs to the STPG1 family.

Its subcellular location is the cytoplasm. The protein localises to the nucleus. Functionally, may positively contribute to the induction of apoptosis triggered by O(6)-methylguanine. The sequence is that of O(6)-methylguanine-induced apoptosis 2 (stpg1) from Danio rerio (Zebrafish).